A 179-amino-acid polypeptide reads, in one-letter code: Large ribosomal subunit protein uL5 (179 aa).

The protein belongs to the universal ribosomal protein uL5 family. In terms of assembly, part of the 50S ribosomal subunit; part of the 5S rRNA/L5/L18/L25 subcomplex. Contacts the 5S rRNA and the P site tRNA. Forms a bridge to the 30S subunit in the 70S ribosome.

This is one of the proteins that bind and probably mediate the attachment of the 5S RNA into the large ribosomal subunit, where it forms part of the central protuberance. In the 70S ribosome it contacts protein S13 of the 30S subunit (bridge B1b), connecting the 2 subunits; this bridge is implicated in subunit movement. Contacts the P site tRNA; the 5S rRNA and some of its associated proteins might help stabilize positioning of ribosome-bound tRNAs. The sequence is that of Large ribosomal subunit protein uL5 from Shewanella pealeana (strain ATCC 700345 / ANG-SQ1).